The sequence spans 282 residues: Methyltransferase tpcH (282 aa).

The protein belongs to the class I-like SAM-binding methyltransferase superfamily. In terms of tissue distribution, specifically expressed in conidia.

Its pathway is secondary metabolite biosynthesis. Functionally, methyltransferase; part of the gene cluster that mediates the biosynthesis of trypacidin, a mycotoxin with antiprotozoal activity and that plays a role in the infection process. The pathway begins with the synthesis of atrochrysone thioester by the polyketide synthase (PKS) tpcC. The atrochrysone carboxyl ACP thioesterase tpcB then breaks the thioester bond and releases the atrochrysone carboxylic acid from tpcC. The decarboxylase tpcK converts atrochrysone carboxylic acid to atrochrysone which is further reduced into emodin anthrone. The next step is performed by the emodin anthrone oxygenase tpcL that catalyzes the oxidation of emodinanthrone to emodin. Emodin O-methyltransferase encoded by tpcA catalyzes methylation of the 8-hydroxy group of emodin to form questin. Ring cleavage of questin by questin oxidase tpcI leads to desmethylsulochrin via several intermediates including questin epoxide. Another methylation step catalyzed by tpcM leads to the formation of sulochrin which is further converted to monomethylsulfochrin by tpcH. Finally, the tpcJ catalyzes the conversion of monomethylsulfochrin to trypacidin. Trypacidin is toxic for human pulmonary and bronchial epithelial cells by initiating the intracellular formation of nitric oxide (NO) and hydrogen peroxide (H(2)O(2)), thus triggering host necrotic cell death. The trypacidin pathway is also able to produce endocrocin via a distinct route from the endocrocin Enc pathway. The sequence is that of Methyltransferase tpcH from Aspergillus fumigatus (strain ATCC MYA-4609 / CBS 101355 / FGSC A1100 / Af293) (Neosartorya fumigata).